We begin with the raw amino-acid sequence, 179 residues long: Acireductone dioxygenase (179 aa).

Fe(2+)-binding residues include histidine 99, histidine 101, glutamate 105, and histidine 143. Ni(2+)-binding residues include histidine 99, histidine 101, glutamate 105, and histidine 143.

This sequence belongs to the acireductone dioxygenase (ARD) family. As to quaternary structure, monomer. Fe(2+) is required as a cofactor. It depends on Ni(2+) as a cofactor.

It carries out the reaction 1,2-dihydroxy-5-(methylsulfanyl)pent-1-en-3-one + O2 = 3-(methylsulfanyl)propanoate + CO + formate + 2 H(+). The catalysed reaction is 1,2-dihydroxy-5-(methylsulfanyl)pent-1-en-3-one + O2 = 4-methylsulfanyl-2-oxobutanoate + formate + 2 H(+). Its pathway is amino-acid biosynthesis; L-methionine biosynthesis via salvage pathway; L-methionine from S-methyl-5-thio-alpha-D-ribose 1-phosphate: step 5/6. Catalyzes 2 different reactions between oxygen and the acireductone 1,2-dihydroxy-3-keto-5-methylthiopentene (DHK-MTPene) depending upon the metal bound in the active site. Fe-containing acireductone dioxygenase (Fe-ARD) produces formate and 2-keto-4-methylthiobutyrate (KMTB), the alpha-ketoacid precursor of methionine in the methionine recycle pathway. Ni-containing acireductone dioxygenase (Ni-ARD) produces methylthiopropionate, carbon monoxide and formate, and does not lie on the methionine recycle pathway. The sequence is that of Acireductone dioxygenase from Sulfurihydrogenibium sp. (strain YO3AOP1).